The primary structure comprises 683 residues: Receptor-like serine/threonine-protein kinase At2g45590 (683 aa).

Positions 1 to 21 (MPSRLSPPDIPPLQPTPTVSD) are disordered. Residues 1 to 30 (MPSRLSPPDIPPLQPTPTVSDGHHRFQTLP) lie on the Extracellular side of the membrane. The chain crosses the membrane as a helical span at residues 31-51 (LIIAGSLTLTGVLLILVTLLI). The Cytoplasmic portion of the chain corresponds to 52–683 (YRRLYRNRTA…FPFKSRKKAR (632 aa)). The Protein kinase domain maps to 92-664 (FSESTHLGHG…GVSEPPHLPF (573 aa)). ATP is bound by residues 98 to 106 (LGHGGFGSV) and Lys121. Asp223 serves as the catalytic Proton acceptor. Residues 406 to 436 (ERPSNNKEWINNGDGSSSVSKKKKKEKKRKP) are disordered. A compositionally biased stretch (polar residues) spans 411–424 (NKEWINNGDGSSSV). Residues 425–436 (SKKKKKEKKRKP) are compositionally biased toward basic residues.

It belongs to the protein kinase superfamily. Ser/Thr protein kinase family.

Its subcellular location is the cell membrane. It carries out the reaction L-seryl-[protein] + ATP = O-phospho-L-seryl-[protein] + ADP + H(+). The catalysed reaction is L-threonyl-[protein] + ATP = O-phospho-L-threonyl-[protein] + ADP + H(+). The protein is Receptor-like serine/threonine-protein kinase At2g45590 of Arabidopsis thaliana (Mouse-ear cress).